We begin with the raw amino-acid sequence, 94 residues long: Conotoxin Gla-MrII (94 aa).

A signal peptide spans 1–25; that stretch reads MFGHTSVSFLLLSIVALGMVATVIC. E30, E34, E37, E40, and E41 each carry 4-carboxyglutamate. Residues 78 to 94 constitute a propeptide that is removed on maturation; it reads STHMQKRFLRMPRDLAD.

It belongs to the conotoxin I2 superfamily. Contains 4 disulfide bonds. Expressed by the venom duct.

Its subcellular location is the secreted. The protein is Conotoxin Gla-MrII of Conus marmoreus (Marble cone).